Here is a 266-residue protein sequence, read N- to C-terminus: Ribosomal RNA small subunit methyltransferase A (266 aa).

Residues Asn-13, Leu-15, Gly-40, Glu-61, Asp-86, and Asn-110 each contribute to the S-adenosyl-L-methionine site.

The protein belongs to the class I-like SAM-binding methyltransferase superfamily. rRNA adenine N(6)-methyltransferase family. RsmA subfamily.

It is found in the cytoplasm. The catalysed reaction is adenosine(1518)/adenosine(1519) in 16S rRNA + 4 S-adenosyl-L-methionine = N(6)-dimethyladenosine(1518)/N(6)-dimethyladenosine(1519) in 16S rRNA + 4 S-adenosyl-L-homocysteine + 4 H(+). In terms of biological role, specifically dimethylates two adjacent adenosines (A1518 and A1519) in the loop of a conserved hairpin near the 3'-end of 16S rRNA in the 30S particle. May play a critical role in biogenesis of 30S subunits. This is Ribosomal RNA small subunit methyltransferase A from Hydrogenovibrio crunogenus (strain DSM 25203 / XCL-2) (Thiomicrospira crunogena).